The sequence spans 240 residues: Octanoyltransferase (240 aa).

Residues glycine 31 to proline 216 form the BPL/LPL catalytic domain. Residues arginine 76–histidine 83, alanine 145–glycine 147, and glycine 159–alanine 161 contribute to the substrate site. The active-site Acyl-thioester intermediate is cysteine 177.

Belongs to the LipB family.

It is found in the cytoplasm. The catalysed reaction is octanoyl-[ACP] + L-lysyl-[protein] = N(6)-octanoyl-L-lysyl-[protein] + holo-[ACP] + H(+). It participates in protein modification; protein lipoylation via endogenous pathway; protein N(6)-(lipoyl)lysine from octanoyl-[acyl-carrier-protein]: step 1/2. In terms of biological role, catalyzes the transfer of endogenously produced octanoic acid from octanoyl-acyl-carrier-protein onto the lipoyl domains of lipoate-dependent enzymes. Lipoyl-ACP can also act as a substrate although octanoyl-ACP is likely to be the physiological substrate. This Roseiflexus sp. (strain RS-1) protein is Octanoyltransferase.